Reading from the N-terminus, the 1042-residue chain is FHIP family protein AAEL005291 (1042 aa).

The segment covering 1-14 (MSWLRSSPLRQSFS) has biased composition (polar residues). Disordered stretches follow at residues 1 to 31 (MSWL…GGNS), 494 to 514 (NNTS…PQGG), 821 to 866 (PHSG…KRND), and 905 to 977 (SNSS…GSPH). Residues 839-859 (VSMTSNLSQTTPMQLTPSSSY) show a composition bias toward polar residues. Low complexity-rich tracts occupy residues 905–940 (SNSS…FMGS) and 956–976 (PSIG…TGSP).

It belongs to the FHIP family.

The protein is FHIP family protein AAEL005291 of Aedes aegypti (Yellowfever mosquito).